We begin with the raw amino-acid sequence, 470 residues long: MVRVRFAPSPTGYLHVGGARTALFNYLFAKHHGGKFILRIEDTDIARSEGIFEENLMKTLQWLGLNWDEGPDIGGSFGPYRQSERLNIYEEYAKKLIALDKAYEVFAYPEEIEEIREKLLSKGLTPHYDRTIFEPFATKERKREYEEKGLKPAIYFSMPRKAFIHNDLVKGTVQFSEGSVGDFAILRSNGIPTYNFACVVDDMLMQITHVIRGDDHLPNTVKQLALYEAFSARPPEIGHVSTILGPDGKKLSKRHGATSIEELRERGYLPQAVVNYLALLGWSSPDAKEIMSMQEMIERFSIDRLSKNPAIFDPAKLSWMNGQYIRSTNEEELEQLLKPLLEKWNFIPRNQDWLRRVIIAVKDRLHTLEDFQHVADFFFVKPEIKTETEYQIKCAMLECADKLESLDRSDKNSIVEVFRSTIKKQKVSAKEFYSTLRYVLTGKHEGPELVDIVFLLGPNEVAARIKSILG.

The 'HIGH' region motif lies at 8 to 18 (PSPTGYLHVGG). Residues 250 to 254 (KLSKR) carry the 'KMSKS' region motif. ATP is bound at residue Lys-253.

The protein belongs to the class-I aminoacyl-tRNA synthetase family. Glutamate--tRNA ligase type 1 subfamily. In terms of assembly, monomer.

Its subcellular location is the cytoplasm. The catalysed reaction is tRNA(Glu) + L-glutamate + ATP = L-glutamyl-tRNA(Glu) + AMP + diphosphate. Its function is as follows. Catalyzes the attachment of glutamate to tRNA(Glu) in a two-step reaction: glutamate is first activated by ATP to form Glu-AMP and then transferred to the acceptor end of tRNA(Glu). The chain is Glutamate--tRNA ligase 1 from Pseudothermotoga lettingae (strain ATCC BAA-301 / DSM 14385 / NBRC 107922 / TMO) (Thermotoga lettingae).